The following is a 205-amino-acid chain: Glycerol-3-phosphate acyltransferase (205 aa).

Topologically, residues 1-3 are periplasmic; the sequence is MSA. The helical transmembrane segment at 4 to 24 threads the bilayer; that stretch reads IAPGMILIAYLCGSISSAILV. The Cytoplasmic portion of the chain corresponds to 25–52; that stretch reads CRLCGLPDPRTSGSGNPGATNVLRIGGK. Residues 53-73 form a helical membrane-spanning segment; the sequence is GAAVAVLIFDVLKGMLPVWGA. Residues 74–80 are Periplasmic-facing; the sequence is YELGVSP. The helical transmembrane segment at 81 to 101 threads the bilayer; it reads FWLGLIAIAACLGHIWPVFFG. The Cytoplasmic segment spans residues 102–111; sequence FKGGKGVATA. The helical transmembrane segment at 112–132 threads the bilayer; sequence FGAIAPISWDLTGVMAGTWLL. Residues 133–137 lie on the Periplasmic side of the membrane; the sequence is TVLLS. Residues 138 to 158 form a helical membrane-spanning segment; the sequence is GYSSLGAIVSALIAPFYVWWF. Residues 159-205 lie on the Cytoplasmic side of the membrane; that stretch reads KPQFTFPVSMLSCLILLRHHDNIQRLWRRQETKIWTKFKRKREKDPE.

The protein belongs to the PlsY family. As to quaternary structure, probably interacts with PlsX.

It is found in the cell inner membrane. It carries out the reaction sn-glycerol 3-phosphate + an acyl-CoA = a 1-acyl-sn-glycero-3-phosphate + CoA. The enzyme catalyses a fatty acyl-[ACP] + sn-glycerol 3-phosphate = a 1-acyl-sn-glycero-3-phosphate + holo-[ACP]. It participates in lipid metabolism; phospholipid metabolism. Functionally, catalyzes the transfer of an acyl group from acyl-ACP to glycerol-3-phosphate (G3P) to form lysophosphatidic acid (LPA). This enzyme can also utilize acyl-CoA as fatty acyl donor, but not acyl-PO(4). This chain is Glycerol-3-phosphate acyltransferase, found in Shigella flexneri serotype 5b (strain 8401).